Here is a 224-residue protein sequence, read N- to C-terminus: Paired immunoglobulin-like type 2 receptor beta (224 aa).

The first 28 residues, 1–28, serve as a signal peptide directing secretion; sequence MALLISLPGGTPAMAQVLLLLSSGCLHA. Residues 29-195 lie on the Extracellular side of the membrane; that stretch reads GNSERYNRKN…NPSLMNLGAM (167 aa). N-linked (GlcNAc...) asparagine glycosylation is found at Asn90, Asn107, and Asn154. A helical transmembrane segment spans residues 196–216; the sequence is VTMLLAKVLVIVLVYGWMIFL. Topologically, residues 217-224 are cytoplasmic; it reads RWKQRPAH.

As to quaternary structure, interacts with CD99. Probably associates with DAP12. As to expression, widely expressed with highest levels in spleen, liver and lung. Predominantly expressed by natural killer cells, macrophages, and granulocytes and dendritic cells (BM-DC).

Its subcellular location is the membrane. Paired receptors consist of highly related activating and inhibitory receptors and are widely involved in the regulation of the immune system. PILRB is thought to act as a cellular signaling activating receptor that associates with ITAM-bearing adapter molecules on the cell surface. Seems to associate with DAP12 and is a receptor for CD99. May be involved in target cell recognition by natural killer cells and in activation of dendritic cells. The chain is Paired immunoglobulin-like type 2 receptor beta (Pilrb) from Mus musculus (Mouse).